A 403-amino-acid polypeptide reads, in one-letter code: Dynactin subunit 2 (403 aa).

The segment at 1–26 (MADPKYADLPGIARNEPDVYETSDLP) is disordered. The residue at position 2 (alanine 2) is an N-acetylalanine. At tyrosine 6 the chain carries Phosphotyrosine. A Phosphoserine modification is found at serine 83. Tyrosine 86 bears the Phosphotyrosine mark. The stretch at 100 to 130 (QQKYQRLLHEVQELTTEVEKIKTTVKESATE) forms a coiled coil. Phosphothreonine is present on residues threonine 134 and threonine 200. The segment at 184–204 (TKNSKGTGSGGKTTSGTPPDS) is disordered. Residues 216-248 (EQDKFSQAAKVAELEKRLTELEATVRCDQDAQN) adopt a coiled-coil conformation. Serine 322 is modified (phosphoserine).

This sequence belongs to the dynactin subunit 2 family. Subunit of dynactin, a multiprotein complex part of a tripartite complex with dynein and a adapter, such as BICDL1, BICD2 or HOOK3. The dynactin complex is built around ACTR1A/ACTB filament and consists of an actin-related filament composed of a shoulder domain, a pointed end and a barbed end. Its length is defined by its flexible shoulder domain. The soulder is composed of 2 DCTN1 subunits, 4 DCTN2 and 2 DCTN3. The 4 DCNT2 (via N-terminus) bind the ACTR1A filament and act as molecular rulers to determine the length. The pointed end is important for binding dynein-dynactin cargo adapters and consists of 4 subunits: ACTR10, DCNT4, DCTN5 and DCTN6. The barbed end is composed of a CAPZA1:CAPZB heterodimers, which binds ACTR1A/ACTB filament and dynactin and stabilizes dynactin. Interacts with BICD2 and CEP135. Interacts with DYNAP. Interacts with ECPAS. Interacts with MAPRE1.

Its subcellular location is the cytoplasm. The protein resides in the cytoskeleton. It is found in the microtubule organizing center. It localises to the centrosome. The protein localises to the membrane. In terms of biological role, part of the dynactin complex that activates the molecular motor dynein for ultra-processive transport along microtubules. In the dynactin soulder domain, binds the ACTR1A filament and acts as a molecular ruler to determine the length. Modulates cytoplasmic dynein binding to an organelle, and plays a role in prometaphase chromosome alignment and spindle organization during mitosis. Involved in anchoring microtubules to centrosomes. May play a role in synapse formation during brain development. The polypeptide is Dynactin subunit 2 (DCTN2) (Bos taurus (Bovine)).